Consider the following 308-residue polypeptide: Methionyl-tRNA formyltransferase (308 aa).

109–112 lines the (6S)-5,6,7,8-tetrahydrofolate pocket; sequence SLLP.

Belongs to the Fmt family.

The enzyme catalyses L-methionyl-tRNA(fMet) + (6R)-10-formyltetrahydrofolate = N-formyl-L-methionyl-tRNA(fMet) + (6S)-5,6,7,8-tetrahydrofolate + H(+). Its function is as follows. Attaches a formyl group to the free amino group of methionyl-tRNA(fMet). The formyl group appears to play a dual role in the initiator identity of N-formylmethionyl-tRNA by promoting its recognition by IF2 and preventing the misappropriation of this tRNA by the elongation apparatus. The sequence is that of Methionyl-tRNA formyltransferase from Clostridium beijerinckii (strain ATCC 51743 / NCIMB 8052) (Clostridium acetobutylicum).